A 120-amino-acid polypeptide reads, in one-letter code: Large ribosomal subunit protein bL12 (120 aa).

It belongs to the bacterial ribosomal protein bL12 family. As to quaternary structure, homodimer. Part of the ribosomal stalk of the 50S ribosomal subunit. Forms a multimeric L10(L12)X complex, where L10 forms an elongated spine to which 2 to 4 L12 dimers bind in a sequential fashion. Binds GTP-bound translation factors.

Functionally, forms part of the ribosomal stalk which helps the ribosome interact with GTP-bound translation factors. Is thus essential for accurate translation. The polypeptide is Large ribosomal subunit protein bL12 (Shouchella clausii (strain KSM-K16) (Alkalihalobacillus clausii)).